A 175-amino-acid chain; its full sequence is Probable RNA-binding protein EIF1AD (175 aa).

Residues 5-89 (TKKRYITNKV…VKGEIEYILD (85 aa)) enclose the S1-like domain. Residues 116-128 (EAKRGQTSDKMID) are compositionally biased toward basic and acidic residues. The interval 116–175 (EAKRGQTSDKMIDDDMLPPSESEEEDESEGEETYDEDDVDDEEEEEFDTYNPNRMQAPSK) is disordered. Over residues 129 to 163 (DDMLPPSESEEEDESEGEETYDEDDVDDEEEEEFD) the composition is skewed to acidic residues. Polar residues predominate over residues 165–175 (YNPNRMQAPSK).

The protein belongs to the EIF1AD family.

In Caenorhabditis elegans, this protein is Probable RNA-binding protein EIF1AD.